The chain runs to 710 residues: F-box/WD repeat-containing protein 7 (710 aa).

The tract at residues 1–158 (MNQELLSVGS…CSSVSDLPAH (158 aa)) is disordered. At Ser-26 the chain carries Phosphoserine. Basic and acidic residues predominate over residues 46-55 (RHQEEEHTAR). Polar residues predominate over residues 69–84 (QNDTQQGQVEENNNRF). A compositionally biased stretch (acidic residues) spans 87–132 (VDEDSSGNQEEQEEDEEHAGEQEEEEEEEEEEEEMDQESDDFDPSD). A compositionally biased stretch (basic and acidic residues) spans 133–142 (DSSREDEHTH). The span at 143–158 (NSNVTNCSSVSDLPAH) shows a compositional bias: polar residues. Thr-208 bears the Phosphothreonine mark. The residue at position 230 (Ser-230) is a Phosphoserine; by SGK1. The region spanning 281-327 (RDFISLLPKELALYVLSFLEPKDLLQAAQTCRYWRILAEDNLLWREK) is the F-box domain. 7 WD repeats span residues 381-421 (GHDD…RTLV), 423-459 (HTGG…CIHT), 462-501 (GHTS…HVLM), 503-539 (HVAA…CLHT), 542-581 (GHTN…HTLT), 583-621 (HQSL…QTLQ), and 625-662 (KHQS…FIRN).

As to quaternary structure, homodimer; homodimerization plays a role in substrate binding and/or ubiquitination and degradation. Component of the SCF(FBXW7) complex consisting of CUL1, RBX1, SKP1 and FBXW7. Interacts (via F-box domain) with SKP1. Interacts (via F-box domain) with pseudophosphatase STYX; the interaction is direct and prevents FBXW7 interaction with SKP1. Interacts with cyclin-E (CCNE1 or CCNE2). Interacts with PSEN1. Forms a trimeric complex with NOTCH1 and SGK1. Interacts with NOTCH1 intracellular domain/NICD and NOTCH4 intracellular domain/NICD. Interacts with NOTCH2 intracellular domain (N2ICD). Interacts with MYC (when phosphorylated). Interacts with USP28, counteracting ubiquitination of MYC. Interacts (when phosphorylated at Thr-208) with PIN1, disrupting FBXW7 dimerization and promoting FBXW7 autoubiquitination and degradation. Interacts with UBE2QL1. Interacts with FAM83D; promotes FBXW7 degradation. Interacts with MYCN; FBXW7 competes with AURKA for binding to unphosphorylated MYCN but not for binding to phosphorylated MYCN. Interacts with JUN. Found in a complex with JUN and PRR7. Interacts with JUN and PRR7; the interaction inhibits ubiquitination-mediated JUN degradation, promoting its phosphorylation and transcriptional activity. Interacts with NFE2L1. Interacts with NR1D1. Interacts with RICTOR; mediates RICTOR ubiquitination and degradation. Interacts with USP38, counteracting ubiquitination of MYC. Phosphorylation at Thr-208 promotes interaction with PIN1, leading to disrupt FBXW7 dimerization and promoting FBXW7 autoubiquitination and degradation. Phosphorylated by ATM at Ser-26 in response to DNA damage, promoting recruitment to DNA damage sites and 'Lys-63'-linked ubiquitination of phosphorylated XRCC4. In terms of processing, ubiquitinated: autoubiquitinates following phosphorylation at Thr-208 and subsequent interaction with PIN1. Ubiquitination leads to its proteasomal degradation. In terms of tissue distribution, widely expressed with highest levels in brain, heart and testis.

It is found in the nucleus. The protein localises to the nucleoplasm. The protein resides in the chromosome. It participates in protein modification; protein ubiquitination. In terms of biological role, substrate recognition component of a SCF (SKP1-CUL1-F-box protein) E3 ubiquitin-protein ligase complex which mediates the ubiquitination and subsequent proteasomal degradation of target proteins. Recognizes and binds phosphorylated sites/phosphodegrons within target proteins and thereafter brings them to the SCF complex for ubiquitination. Mediates ubiquitination and subsequent degradation of CCNE1 and MYC. Identified substrates include cyclin-E (CCNE1 or CCNE2), DISC1, JUN, MYC, NOTCH1 released notch intracellular domain (NICD), NOTCH2, MCL1, MLST8, RICTOR and probably PSEN1. Acts as a negative regulator of JNK signaling by binding to phosphorylated JUN and promoting its ubiquitination and subsequent degradation. SCF(FBXW7) complex mediates the ubiquitination and subsequent degradation of NFE2L1. Involved in bone homeostasis and negative regulation of osteoclast differentiation. Regulates the amplitude of the cyclic expression of hepatic core clock genes and genes involved in lipid and glucose metabolism via ubiquitination and proteasomal degradation of their transcriptional repressor NR1D1; CDK1-dependent phosphorylation of NR1D1 is necessary for SCF(FBXW7)-mediated ubiquitination. Also able to promote 'Lys-63'-linked ubiquitination in response to DNA damage. The SCF(FBXW7) complex facilitates double-strand break repair following phosphorylation by ATM: phosphorylation promotes localization to sites of double-strand breaks and 'Lys-63'-linked ubiquitination of phosphorylated XRCC4, enhancing DNA non-homologous end joining. The protein is F-box/WD repeat-containing protein 7 of Mus musculus (Mouse).